A 310-amino-acid chain; its full sequence is tRNA dimethylallyltransferase (310 aa).

14-21 lines the ATP pocket; that stretch reads GPTASGKS. Residue 16 to 21 coordinates substrate; sequence TASGKS. Interaction with substrate tRNA regions lie at residues 39–42 and 163–167; these read DSMQ and QRIVR.

This sequence belongs to the IPP transferase family. As to quaternary structure, monomer. Mg(2+) is required as a cofactor.

It carries out the reaction adenosine(37) in tRNA + dimethylallyl diphosphate = N(6)-dimethylallyladenosine(37) in tRNA + diphosphate. In terms of biological role, catalyzes the transfer of a dimethylallyl group onto the adenine at position 37 in tRNAs that read codons beginning with uridine, leading to the formation of N6-(dimethylallyl)adenosine (i(6)A). The sequence is that of tRNA dimethylallyltransferase from Brucella melitensis biotype 2 (strain ATCC 23457).